A 409-amino-acid chain; its full sequence is Astacin-like metalloendopeptidase (409 aa).

The first 19 residues, 1–19 (MDLKMLLIFIAFLLPSVLG), serve as a signal peptide directing secretion. Residues 30–39 (TATTESTQVT) are compositionally biased toward low complexity. The disordered stretch occupies residues 30–54 (TATTESTQVTTEEDIYDSPSPAETD). In terms of domain architecture, Peptidase M12A spans 87–285 (SAINCRNCYW…AKINRLYNCS (199 aa)). 5 disulfide bridges follow: cysteine 91–cysteine 94, cysteine 134–cysteine 284, cysteine 155–cysteine 175, cysteine 287–cysteine 313, and cysteine 339–cysteine 362. Zn(2+) is bound at residue histidine 183. Glutamate 184 is an active-site residue. Zn(2+) contacts are provided by histidine 187 and histidine 193. Residues 287–399 (CSTIIDAAFG…SGFQATFTSA (113 aa)) enclose the CUB domain.

The cofactor is Zn(2+). As to expression, expressed in ovary and gonads.

The protein localises to the cytoplasm. It localises to the cell membrane. The protein resides in the cytoplasmic vesicle. Its subcellular location is the secretory vesicle. It is found in the cortical granule. Functionally, probable oocyte-specific oolemmal receptor involved in sperm and egg adhesion and fertilization. May act as a protease. The sequence is that of Astacin-like metalloendopeptidase (ASTL) from Gallus gallus (Chicken).